Here is a 261-residue protein sequence, read N- to C-terminus: Acetylglutamate kinase (261 aa).

Substrate contacts are provided by residues 45 to 46, Arg-67, and Asn-162; that span reads GG.

It belongs to the acetylglutamate kinase family. ArgB subfamily.

It localises to the cytoplasm. It carries out the reaction N-acetyl-L-glutamate + ATP = N-acetyl-L-glutamyl 5-phosphate + ADP. It functions in the pathway amino-acid biosynthesis; L-arginine biosynthesis; N(2)-acetyl-L-ornithine from L-glutamate: step 2/4. Functionally, catalyzes the ATP-dependent phosphorylation of N-acetyl-L-glutamate. This chain is Acetylglutamate kinase, found in Bacteroides fragilis (strain ATCC 25285 / DSM 2151 / CCUG 4856 / JCM 11019 / LMG 10263 / NCTC 9343 / Onslow / VPI 2553 / EN-2).